The chain runs to 371 residues: MEKRPEDTRVVVGMSGGVDSSVAALLLKEQGYDVIGIFMKNWDDTDENGFCTATEDYEDVIRVCNQIGIPYYAVNFEKQYWEKVFQYFLDEYKAGRTPNPDVMCNKEIKFKAFLDHALSLGADYLATGHYARVDRSAGTVRMLRGLDENKDQTYFLNQLNQEQLSKVMFPIGDLQKSRVREIAKEAELATAAKKDSTGICFIGERNFKTFLSQYLPAQPGDMMTMDGEVKGRHDGLMYYTIGQRHGLGIGGSGEPWFAVGKDLEKNILYVDQGFHNPLLYSDKITATNVSWTRPGLMDGGEMTCTAKFRYRQEDHKVTVKMTGDDEAEVIFDGQVRAVTPGQAVVFYDGEECLGGGTIDDVYKDGTKLWYV.

ATP is bound by residues 13–20 (GMSGGVDS) and M39. The interval 99–101 (NPD) is interaction with target base in tRNA. Catalysis depends on C104, which acts as the Nucleophile. A disulfide bridge connects residues C104 and C200. G128 lines the ATP pocket. Residues 150-152 (KDQ) form an interaction with tRNA region. C200 serves as the catalytic Cysteine persulfide intermediate. The tract at residues 309 to 310 (RY) is interaction with tRNA.

The protein belongs to the MnmA/TRMU family.

The protein localises to the cytoplasm. It catalyses the reaction S-sulfanyl-L-cysteinyl-[protein] + uridine(34) in tRNA + AH2 + ATP = 2-thiouridine(34) in tRNA + L-cysteinyl-[protein] + A + AMP + diphosphate + H(+). In terms of biological role, catalyzes the 2-thiolation of uridine at the wobble position (U34) of tRNA, leading to the formation of s(2)U34. In Bacillus velezensis (strain DSM 23117 / BGSC 10A6 / LMG 26770 / FZB42) (Bacillus amyloliquefaciens subsp. plantarum), this protein is tRNA-specific 2-thiouridylase MnmA.